Here is a 150-residue protein sequence, read N- to C-terminus: Arginine repressor (150 aa).

Belongs to the ArgR family.

Its subcellular location is the cytoplasm. The protein operates within amino-acid biosynthesis; L-arginine biosynthesis [regulation]. Regulates arginine biosynthesis genes. The polypeptide is Arginine repressor (Clostridium acetobutylicum (strain ATCC 824 / DSM 792 / JCM 1419 / IAM 19013 / LMG 5710 / NBRC 13948 / NRRL B-527 / VKM B-1787 / 2291 / W)).